The primary structure comprises 189 residues: Peptidyl-tRNA hydrolase (189 aa).

Residue Y15 participates in tRNA binding. H20 acts as the Proton acceptor in catalysis. F66, N68, and N114 together coordinate tRNA.

Belongs to the PTH family. Monomer.

It localises to the cytoplasm. The enzyme catalyses an N-acyl-L-alpha-aminoacyl-tRNA + H2O = an N-acyl-L-amino acid + a tRNA + H(+). Functionally, hydrolyzes ribosome-free peptidyl-tRNAs (with 1 or more amino acids incorporated), which drop off the ribosome during protein synthesis, or as a result of ribosome stalling. Its function is as follows. Catalyzes the release of premature peptidyl moieties from peptidyl-tRNA molecules trapped in stalled 50S ribosomal subunits, and thus maintains levels of free tRNAs and 50S ribosomes. This Streptococcus pneumoniae (strain CGSP14) protein is Peptidyl-tRNA hydrolase.